Here is a 68-residue protein sequence, read N- to C-terminus: Large ribosomal subunit protein uL29 (68 aa).

This sequence belongs to the universal ribosomal protein uL29 family.

The chain is Large ribosomal subunit protein uL29 from Acidiphilium cryptum (strain JF-5).